The primary structure comprises 218 residues: Carnitine transport permease protein OpuCB (218 aa).

Residues 19–198 enclose the ABC transmembrane type-1 domain; that stretch reads TWQHLFISLS…ILALVVEFAL (180 aa). The next 5 helical transmembrane spans lie at 23–43, 48–68, 79–101, 149–169, and 179–199; these read LFISLSAVILGIAVAVPTGIL, PKVANFVIGVVSVLQTVPSLA, VGTLPAIIALFIYALLPILRNTF, VIAWATLASYIGAGGLGDFIF, and LILGGAIPVTILALVVEFALG.

Belongs to the binding-protein-dependent transport system permease family. As to quaternary structure, the complex is composed of two ATP-binding proteins (OpuCA), two transmembrane proteins (OpuCB and OpuCD) and a solute-binding protein (OpuCC).

The protein localises to the cell membrane. Functionally, part of the ABC transporter complex OpuCABCD involved in carnitine uptake. Probably responsible for the translocation of the substrate across the membrane. Involved, with BetL and GbuABC, in osmoprotection and cryoprotection of Listeria. This Listeria monocytogenes protein is Carnitine transport permease protein OpuCB (opuCB).